We begin with the raw amino-acid sequence, 428 residues long: Anaerobic glycerol-3-phosphate dehydrogenase subunit B (428 aa).

Belongs to the anaerobic G-3-P dehydrogenase subunit B family. In terms of assembly, composed of a catalytic GlpA/B dimer and of membrane bound GlpC. FMN is required as a cofactor.

The enzyme catalyses a quinone + sn-glycerol 3-phosphate = dihydroxyacetone phosphate + a quinol. The protein operates within polyol metabolism; glycerol degradation via glycerol kinase pathway; glycerone phosphate from sn-glycerol 3-phosphate (anaerobic route): step 1/1. Functionally, conversion of glycerol 3-phosphate to dihydroxyacetone. Uses fumarate or nitrate as electron acceptor. This is Anaerobic glycerol-3-phosphate dehydrogenase subunit B from Actinobacillus pleuropneumoniae serotype 5b (strain L20).